Here is a 614-residue protein sequence, read N- to C-terminus: Zinc finger protein 276 (614 aa).

The segment at 1–50 (MKRDRLGRFLSPGSSRQCGASDGGGGVSRTRGRPSLSGGPRVDGATARRA) is disordered. One can recognise a ZAD domain in the interval 77–163 (GHCRLCHGKF…LQRVNASPAG (87 aa)). Zn(2+)-binding residues include C79, C82, C136, and C139. The segment at 268–420 (APRLPQHRGW…KKPGPKPGWK (153 aa)) is disordered. Acidic residues predominate over residues 357–369 (SDLSEGDVLSEDE). The span at 386–408 (YPERKVSGKKSESKEAKKSEEPR) shows a compositional bias: basic and acidic residues. Over residues 409 to 420 (IRKKPGPKPGWK) the composition is skewed to basic residues. C2H2-type zinc fingers lie at residues 434-458 (YKCP…IKEH), 465-490 (RPCP…KLIH), 496-518 (YICD…QMRH), 524-546 (LQCE…MTKH), and 554-577 (FACD…SMVH). The segment at 583–614 (QDKALPLEAEPPPGPPSPSVTTEGQAVKPEPT) is disordered. Positions 591 to 600 (AEPPPGPPSP) are enriched in pro residues.

The protein resides in the nucleus. It localises to the chromosome. It is found in the centromere. The protein localises to the kinetochore. Its function is as follows. May be involved in transcriptional regulation. The polypeptide is Zinc finger protein 276 (ZNF276) (Homo sapiens (Human)).